Reading from the N-terminus, the 331-residue chain is Mitochondrial glycine transporter (331 aa).

Solcar repeat units lie at residues S19 to G103, L132 to R216, and S234 to R318. The next 6 helical transmembrane spans lie at F25–Q50, G78–L104, L138–E163, G191–K214, I238–L264, and G293–V311.

Belongs to the mitochondrial carrier (TC 2.A.29) family. SLC25A38 subfamily.

It localises to the mitochondrion inner membrane. It carries out the reaction glycine(in) = glycine(out). Its function is as follows. Mitochondrial glycine transporter that imports glycine into the mitochondrial matrix. Plays an important role in providing glycine for the first enzymatic step in heme biosynthesis, the condensation of glycine with succinyl-CoA to produce 5-aminolevulinate (ALA) in the mitochondrial matrix. The sequence is that of Mitochondrial glycine transporter from Neosartorya fischeri (strain ATCC 1020 / DSM 3700 / CBS 544.65 / FGSC A1164 / JCM 1740 / NRRL 181 / WB 181) (Aspergillus fischerianus).